The chain runs to 443 residues: Thymidine phosphorylase (443 aa).

This sequence belongs to the thymidine/pyrimidine-nucleoside phosphorylase family. Homodimer.

The enzyme catalyses thymidine + phosphate = 2-deoxy-alpha-D-ribose 1-phosphate + thymine. It participates in pyrimidine metabolism; dTMP biosynthesis via salvage pathway; dTMP from thymine: step 1/2. Its function is as follows. The enzymes which catalyze the reversible phosphorolysis of pyrimidine nucleosides are involved in the degradation of these compounds and in their utilization as carbon and energy sources, or in the rescue of pyrimidine bases for nucleotide synthesis. The protein is Thymidine phosphorylase of Shewanella baltica (strain OS155 / ATCC BAA-1091).